Here is a 108-residue protein sequence, read N- to C-terminus: Small ribosomal subunit protein eS25 (108 aa).

A disordered region spans residues 1–36 (MAPKKAQAPPPSSKPAKSGGGKQKKKKWSKGKQKEK). Residues 22-31 (KQKKKKWSKG) are compositionally biased toward basic residues.

This sequence belongs to the eukaryotic ribosomal protein eS25 family.

This is Small ribosomal subunit protein eS25 (RPS25) from Solanum lycopersicum (Tomato).